A 302-amino-acid polypeptide reads, in one-letter code: Sulfate adenylyltransferase subunit 2 (302 aa).

The disordered stretch occupies residues 280-302; the sequence is RQGRAIDHDQSGSMELKKRQGYF.

This sequence belongs to the PAPS reductase family. CysD subfamily. In terms of assembly, heterodimer composed of CysD, the smaller subunit, and CysN.

It catalyses the reaction sulfate + ATP + H(+) = adenosine 5'-phosphosulfate + diphosphate. It functions in the pathway sulfur metabolism; hydrogen sulfide biosynthesis; sulfite from sulfate: step 1/3. With CysN forms the ATP sulfurylase (ATPS) that catalyzes the adenylation of sulfate producing adenosine 5'-phosphosulfate (APS) and diphosphate, the first enzymatic step in sulfur assimilation pathway. APS synthesis involves the formation of a high-energy phosphoric-sulfuric acid anhydride bond driven by GTP hydrolysis by CysN coupled to ATP hydrolysis by CysD. The chain is Sulfate adenylyltransferase subunit 2 from Vibrio parahaemolyticus serotype O3:K6 (strain RIMD 2210633).